The chain runs to 88 residues: Small ribosomal subunit protein uS15 (88 aa).

The protein belongs to the universal ribosomal protein uS15 family. Part of the 30S ribosomal subunit. Forms a bridge to the 50S subunit in the 70S ribosome, contacting the 23S rRNA.

Its function is as follows. One of the primary rRNA binding proteins, it binds directly to 16S rRNA where it helps nucleate assembly of the platform of the 30S subunit by binding and bridging several RNA helices of the 16S rRNA. Forms an intersubunit bridge (bridge B4) with the 23S rRNA of the 50S subunit in the ribosome. The polypeptide is Small ribosomal subunit protein uS15 (Paracidovorax citrulli (strain AAC00-1) (Acidovorax citrulli)).